The chain runs to 455 residues: Protein FAM124B (455 aa).

Serine 49 carries the phosphoserine modification. The disordered stretch occupies residues 270-322 (TSVSAKRTSEPRSQRNQGKRSQGHSLELPEPSGSPTSDRCAGTSWKSPGRSFQ). Polar residues predominate over residues 313 to 322 (SWKSPGRSFQ).

It belongs to the FAM124 family. In terms of assembly, interacts with CHD7 and CHD8.

It localises to the nucleus. This chain is Protein FAM124B (FAM124B), found in Homo sapiens (Human).